An 89-amino-acid polypeptide reads, in one-letter code: Small ribosomal subunit protein uS15 (89 aa).

The tract at residues 1-22 is disordered; the sequence is MALEKEEKSQIINNYQLHETDT. The span at 10 to 22 shows a compositional bias: polar residues; sequence QIINNYQLHETDT.

It belongs to the universal ribosomal protein uS15 family. In terms of assembly, part of the 30S ribosomal subunit. Forms a bridge to the 50S subunit in the 70S ribosome, contacting the 23S rRNA.

Its function is as follows. One of the primary rRNA binding proteins, it binds directly to 16S rRNA where it helps nucleate assembly of the platform of the 30S subunit by binding and bridging several RNA helices of the 16S rRNA. Forms an intersubunit bridge (bridge B4) with the 23S rRNA of the 50S subunit in the ribosome. This is Small ribosomal subunit protein uS15 from Chloroflexus aggregans (strain MD-66 / DSM 9485).